The following is a 203-amino-acid chain: Outer-membrane lipoprotein LolB (203 aa).

Positions 1 to 20 are cleaved as a signal peptide; it reads MNRSRRLALLCLGVPLLLQA. Cysteine 21 carries N-palmitoyl cysteine lipidation. Cysteine 21 is lipidated: S-diacylglycerol cysteine.

The protein belongs to the LolB family. As to quaternary structure, monomer.

It localises to the cell outer membrane. Its function is as follows. Plays a critical role in the incorporation of lipoproteins in the outer membrane after they are released by the LolA protein. The polypeptide is Outer-membrane lipoprotein LolB (Cupriavidus taiwanensis (strain DSM 17343 / BCRC 17206 / CCUG 44338 / CIP 107171 / LMG 19424 / R1) (Ralstonia taiwanensis (strain LMG 19424))).